The primary structure comprises 357 residues: Aminomethyltransferase (357 aa).

Belongs to the GcvT family. The glycine cleavage system is composed of four proteins: P, T, L and H.

The enzyme catalyses N(6)-[(R)-S(8)-aminomethyldihydrolipoyl]-L-lysyl-[protein] + (6S)-5,6,7,8-tetrahydrofolate = N(6)-[(R)-dihydrolipoyl]-L-lysyl-[protein] + (6R)-5,10-methylene-5,6,7,8-tetrahydrofolate + NH4(+). Its function is as follows. The glycine cleavage system catalyzes the degradation of glycine. This chain is Aminomethyltransferase, found in Halothermothrix orenii (strain H 168 / OCM 544 / DSM 9562).